The primary structure comprises 492 residues: Replication factor C large subunit (492 aa).

Residue 46 to 53 participates in ATP binding; that stretch reads GPPGSGKT. The segment at 445–492 is disordered; that stretch reads VIPKRPKISDNQISEILTKDNNPKDDVKKASKKPESTSKKQATLDKFF. The span at 461 to 482 shows a compositional bias: basic and acidic residues; sequence LTKDNNPKDDVKKASKKPESTS.

The protein belongs to the activator 1 small subunits family. RfcL subfamily. As to quaternary structure, heteromultimer composed of small subunits (RfcS) and large subunits (RfcL).

Its function is as follows. Part of the RFC clamp loader complex which loads the PCNA sliding clamp onto DNA. The chain is Replication factor C large subunit from Methanococcus vannielii (strain ATCC 35089 / DSM 1224 / JCM 13029 / OCM 148 / SB).